Reading from the N-terminus, the 240-residue chain is Uridylate kinase (240 aa).

An ATP-binding site is contributed by lysine 12–glycine 15. The interval glycine 20–glycine 25 is involved in allosteric activation by GTP. A UMP-binding site is contributed by glycine 54. 2 residues coordinate ATP: glycine 55 and arginine 59. UMP contacts are provided by residues aspartate 74 and threonine 135–threonine 142. Residues asparagine 163, tyrosine 169, and aspartate 172 each coordinate ATP.

This sequence belongs to the UMP kinase family. As to quaternary structure, homohexamer.

The protein localises to the cytoplasm. It carries out the reaction UMP + ATP = UDP + ADP. It functions in the pathway pyrimidine metabolism; CTP biosynthesis via de novo pathway; UDP from UMP (UMPK route): step 1/1. Its activity is regulated as follows. Allosterically activated by GTP. Inhibited by UTP. Functionally, catalyzes the reversible phosphorylation of UMP to UDP. The sequence is that of Uridylate kinase from Geobacillus thermodenitrificans (strain NG80-2).